A 90-amino-acid chain; its full sequence is Small ribosomal subunit protein uS15 (90 aa).

The protein belongs to the universal ribosomal protein uS15 family. Part of the 30S ribosomal subunit. Forms a bridge to the 50S subunit in the 70S ribosome, contacting the 23S rRNA.

One of the primary rRNA binding proteins, it binds directly to 16S rRNA where it helps nucleate assembly of the platform of the 30S subunit by binding and bridging several RNA helices of the 16S rRNA. Its function is as follows. Forms an intersubunit bridge (bridge B4) with the 23S rRNA of the 50S subunit in the ribosome. The chain is Small ribosomal subunit protein uS15 from Campylobacter concisus (strain 13826).